The primary structure comprises 255 residues: ETS-related transcription factor Elf-5 (255 aa).

The PNT domain maps to 33–119 (YPAFEHQTAC…FILQSIRSQG (87 aa)). Positions 163-244 (SHLWEFVRDL…VDRRLVYKFG (82 aa)) form a DNA-binding region, ETS.

This sequence belongs to the ETS family.

The protein localises to the nucleus. Its function is as follows. Transcriptionally activator that may play a role in regulating the later stages of keratinocytes terminal differentiation. Binds to DNA sequences containing the consensus nucleotide core sequence GGA[AT]. This is ETS-related transcription factor Elf-5 (ELF5) from Bos taurus (Bovine).